Consider the following 67-residue polypeptide: MASYRNSRSRSRSRFRRRRGRRSRVRGRDARQGRSSRRRRRGKGRAHSGKKGRRSGSRRRKRNNENK.

Residues 1 to 67 (MASYRNSRSR…RRRKRNNENK (67 aa)) are disordered. Basic residues-rich tracts occupy residues 7–25 (SRSR…RSRV) and 34–67 (RSSR…NENK).

Belongs to the protamine P1 family. Testis.

The protein resides in the nucleus. The protein localises to the chromosome. Its function is as follows. Protamines substitute for histones in the chromatin of sperm during the haploid phase of spermatogenesis. They compact sperm DNA into a highly condensed, stable and inactive complex. The chain is Sperm protamine P1 (PRM1) from Isoodon macrourus (Short-nosed bandicoot).